Consider the following 354-residue polypeptide: Peptide chain release factor 1 (354 aa).

Q230 is modified (N5-methylglutamine).

Belongs to the prokaryotic/mitochondrial release factor family. In terms of processing, methylated by PrmC. Methylation increases the termination efficiency of RF1.

The protein localises to the cytoplasm. In terms of biological role, peptide chain release factor 1 directs the termination of translation in response to the peptide chain termination codons UAG and UAA. The chain is Peptide chain release factor 1 from Novosphingobium aromaticivorans (strain ATCC 700278 / DSM 12444 / CCUG 56034 / CIP 105152 / NBRC 16084 / F199).